Reading from the N-terminus, the 245-residue chain is Uridylate kinase (245 aa).

ATP is bound at residue 12-15 (KLSG). The segment at 20–25 (GERGVG) is involved in allosteric activation by GTP. Position 54 (G54) interacts with UMP. Residues G55 and R59 each coordinate ATP. Residues D74 and 135–142 (IGSPYFST) contribute to the UMP site. ATP-binding residues include N163, Y169, and D172.

The protein belongs to the UMP kinase family. In terms of assembly, homohexamer.

Its subcellular location is the cytoplasm. The enzyme catalyses UMP + ATP = UDP + ADP. It participates in pyrimidine metabolism; CTP biosynthesis via de novo pathway; UDP from UMP (UMPK route): step 1/1. With respect to regulation, allosterically activated by GTP. Inhibited by UTP. In terms of biological role, catalyzes the reversible phosphorylation of UMP to UDP. The polypeptide is Uridylate kinase (Streptococcus pneumoniae serotype 2 (strain D39 / NCTC 7466)).